Consider the following 392-residue polypeptide: N-acetylneuraminate epimerase (392 aa).

The first 35 residues, 1 to 35, serve as a signal peptide directing secretion; sequence MTQLYPQYKKQLTTKIVLFSALSLLMMASLPNTYA. Kelch repeat units follow at residues 56-100, 102-155, 157-192, 193-238, 241-290, 312-361, and 363-392; these read SLYV…VVLA, KLYV…TTLD, SQAV…AVIN, AYFN…SRMD, LILI…LAGA, KQFN…QGPD, and VILI…LHIE. Residue E247 is the Proton acceptor of the active site.

The protein belongs to the NanM family. In terms of assembly, homodimer.

It localises to the periplasm. The catalysed reaction is N-acetyl-alpha-neuraminate = N-acetyl-beta-neuraminate. Converts alpha-N-acetylneuranimic acid (Neu5Ac) to the beta-anomer, accelerating the equilibrium between the alpha- and beta-anomers. Probably facilitates sialidase-negative bacteria to compete successfully for limited amounts of extracellular Neu5Ac, which is likely taken up in the beta-anomer. In addition, the rapid removal of sialic acid from solution might be advantageous to the bacterium to damp down host responses. This is N-acetylneuraminate epimerase from Yersinia pseudotuberculosis serotype O:1b (strain IP 31758).